Consider the following 541-residue polypeptide: Membrane protein insertase YidC (541 aa).

A helical membrane pass occupies residues serine 6–aspartate 26. A disordered region spans residues glutamate 34–isoleucine 56. The next 4 membrane-spanning stretches (helical) occupy residues phenylalanine 337–valine 357, leucine 416–phenylalanine 436, leucine 454–leucine 474, and proline 495–valine 515.

This sequence belongs to the OXA1/ALB3/YidC family. Type 1 subfamily. As to quaternary structure, interacts with the Sec translocase complex via SecD. Specifically interacts with transmembrane segments of nascent integral membrane proteins during membrane integration.

The protein resides in the cell inner membrane. Functionally, required for the insertion and/or proper folding and/or complex formation of integral membrane proteins into the membrane. Involved in integration of membrane proteins that insert both dependently and independently of the Sec translocase complex, as well as at least some lipoproteins. Aids folding of multispanning membrane proteins. The chain is Membrane protein insertase YidC from Haemophilus influenzae (strain 86-028NP).